Consider the following 2188-residue polypeptide: Phenolphthiocerol/phthiocerol polyketide synthase subunit C (2188 aa).

One can recognise a Ketosynthase family 3 (KS3) domain in the interval 34–462; sequence SEPIAVIGMG…GTNAHVVIEQ (429 aa). Catalysis depends on for beta-ketoacyl synthase activity residues C210, H345, and H384. The acyltransferase stretch occupies residues 572 to 890; it reads VFVYSGRGSQ…NLNTTHTTHP (319 aa). The active-site For malonyltransferase activity is S660. The N-terminal hotdog fold stretch occupies residues 928–1050; it reads HPLLGVGVTD…ATVARAEPLA (123 aa). Residues 928 to 1093 are dehydratase; sequence HPLLGVGVTD…QQHGPAFQGI (166 aa). The 296-residue stretch at 928-1223 folds into the PKS/mFAS DH domain; the sequence is HPLLGVGVTD…MAVLGSGSGA (296 aa). Residue H959 is the Proton acceptor; for dehydratase activity of the active site. Residues 1067–1223 are C-terminal hotdog fold; sequence EDQLDPDDLY…MAVLGSGSGA (157 aa). The Proton donor; for dehydratase activity role is filled by D1129. Residues 1467–1778 are enoylreductase; it reads GRLDALNVHE…SGKHTGKIVI (312 aa). The segment at 1802-1981 is beta-ketoacyl reductase; sequence GGYLIVGGMG…GINWGPWADV (180 aa). Residue 1803–1848 coordinates NADP(+); that stretch reads GYLIVGGMGGLGFVVARWLAEQGAGLIVLNGRSAPSDEVAAAIAEL. Positions 2069-2145 constitute a Carrier domain; it reads ERPGHLASAI…DLATALCERM (77 aa). S2105 carries the O-(pantetheine 4'-phosphoryl)serine modification.

In terms of assembly, homodimer. Requires NADP(+) as cofactor. The cofactor is pantetheine 4'-phosphate.

It catalyses the reaction icosanoyl-[(phenol)carboxyphthiodiolenone synthase] + 2 (S)-methylmalonyl-CoA + 3 malonyl-CoA + 5 NADPH + 10 H(+) = C32-carboxyphthiodiolenone-[(phenol)carboxyphthiodiolenone synthase] + 5 CO2 + 5 NADP(+) + 5 CoA + 2 H2O. It carries out the reaction docosanoyl-[(phenol)carboxyphthiodiolenone synthase] + 2 (S)-methylmalonyl-CoA + 3 malonyl-CoA + 5 NADPH + 10 H(+) = C34-carboxyphthiodiolenone-[(phenol)carboxyphthiodiolenone synthase] + 5 CO2 + 5 NADP(+) + 5 CoA + 2 H2O. The enzyme catalyses 17-(4-hydroxyphenyl)heptadecanoyl-[(phenol)carboxyphthiodiolenone synthase] + 2 (S)-methylmalonyl-CoA + 3 malonyl-CoA + 5 NADPH + 10 H(+) = C35-(phenol)carboxyphthiodiolenone-[(phenol)carboxyphthiodiolenone synthase] + 5 CO2 + 5 NADP(+) + 5 CoA + 2 H2O. The catalysed reaction is 19-(4-hydroxyphenyl)nonadecanoyl-[(phenol)carboxyphthiodiolenone synthase] + 2 (S)-methylmalonyl-CoA + 3 malonyl-CoA + 5 NADPH + 10 H(+) = C37-(phenol)carboxyphthiodiolenone-[(phenol)carboxyphthiodiolenone synthase] + 5 CO2 + 5 NADP(+) + 5 CoA + 2 H2O. The protein operates within lipid metabolism; fatty acid biosynthesis. Its function is as follows. Part of the PpsABCDE complex involved in the biosynthesis of the lipid core common to phthiocerols and phenolphthiocerols by successive additions of malonyl-CoA or methylmalonyl-CoA extender units. PpsA can accept as substrate the activated forms of either icosanoyl (C20), docosanoyl (C22) or lignoceroyl (C24) groups from FadD26, or a (4-hydroxyphenyl)-C17 or (4-hydroxyphenyl)-C19 fatty acyl from FadD29. PpsA initiates the biosynthesis and extends its substrate using a malonyl-CoA extender unit. The PpsB and PpsC proteins add the second and third malonyl-CoA extender units. PpsD adds an (R)-methylmalonyl unit and PpsE adds a second (R)-methylmalonyl unit. The incorporation of the methylmalonyl units results in formation of two branched methyl groups in the elongated product. This chain is Phenolphthiocerol/phthiocerol polyketide synthase subunit C (ppsC), found in Mycobacterium bovis (strain ATCC BAA-935 / AF2122/97).